The sequence spans 847 residues: B-cell receptor CD22 (847 aa).

Positions 1-19 are cleaved as a signal peptide; that stretch reads MHLLGPWLLLLVLEYLAFS. In terms of domain architecture, Ig-like V-type spans 20–138; it reads DSSKWVFEHP…MERIHLNVSE (119 aa). The Extracellular portion of the chain corresponds to 20 to 687; sequence DSSKWVFEHP…YYSPETIGRR (668 aa). 3 disulfides stabilise this stretch: cysteine 39–cysteine 167, cysteine 44–cysteine 102, and cysteine 161–cysteine 219. 3 N-linked (GlcNAc...) asparagine glycosylation sites follow: asparagine 67, asparagine 101, and asparagine 112. Arginine 120 contacts N-acetylneuraminate. Asparagine 135, asparagine 164, and asparagine 231 each carry an N-linked (GlcNAc...) asparagine glycan. 6 consecutive Ig-like C2-type domains span residues 143 to 235, 242 to 326, 331 to 416, 419 to 500, 505 to 582, and 593 to 676; these read PHIQ…DTVQ, PKLE…VFLQ, PEPS…LDVQ, PKKV…VALN, PRDV…QTAS, and PRRL…STLT. Disulfide bonds link cysteine 265–cysteine 309, cysteine 353–cysteine 396, cysteine 442–cysteine 484, and cysteine 529–cysteine 571. Residues asparagine 363, asparagine 445, and asparagine 479 are each glycosylated (N-linked (GlcNAc...) asparagine). Residues asparagine 574 and asparagine 634 are each glycosylated (N-linked (GlcNAc...) asparagine). Cysteine 616 and cysteine 659 are disulfide-bonded. Residues 688-706 traverse the membrane as a helical segment; sequence VAVGLGSCLAILILAICGL. Over 707 to 847 the chain is Cytoplasmic; the sequence is KLQRRWKRTQ…ENVDYVILKH (141 aa). A phosphoserine mark is found at serine 725, serine 726, and serine 729. 2 consecutive short sequence motifs (ITIM motif) follow at residues 760 to 765 and 794 to 799; these read ISYTTL and VTYSAL. Phosphotyrosine is present on tyrosine 762. 3 positions are modified to phosphotyrosine: tyrosine 807, tyrosine 822, and tyrosine 842. 2 short sequence motifs (ITIM motif) span residues 820 to 825 and 840 to 845; these read IHYSEL and VDYVIL.

It belongs to the immunoglobulin superfamily. SIGLEC (sialic acid binding Ig-like lectin) family. As to quaternary structure, predominantly monomer of isoform CD22-beta. Also found as heterodimer of isoform CD22-beta and a shorter isoform. Interacts with PTPN6/SHP-1, LYN, SYK, PIK3R1/PIK3R2 and PLCG1 upon phosphorylation. Interacts with GRB2, INPP5D and SHC1 upon phosphorylation. May form a complex with INPP5D/SHIP, GRB2 and SHC1. In terms of processing, phosphorylation of Tyr-762, Tyr-807 and Tyr-822 are involved in binding to SYK, GRB2 and SYK, respectively. Phosphorylation of Tyr-842 is involved in binding to SYK, PLCG2 and PIK3R1/PIK3R2. Post-translationally, phosphorylated on tyrosine residues by LYN. In terms of tissue distribution, B-lymphocytes.

Its subcellular location is the cell membrane. Functionally, most highly expressed siglec (sialic acid-binding immunoglobulin-like lectin) on B-cells that plays a role in various aspects of B-cell biology including differentiation, antigen presentation, and trafficking to bone marrow. Binds to alpha 2,6-linked sialic acid residues of surface molecules such as CD22 itself, CD45 and IgM in a cis configuration. Can also bind to ligands on other cells as an adhesion molecule in a trans configuration. Acts as an inhibitory coreceptor on the surface of B-cells and inhibits B-cell receptor induced signaling, characterized by inhibition of the calcium mobilization and cellular activation. Mechanistically, the immunoreceptor tyrosine-based inhibitory motif domain is phosphorylated by the Src kinase LYN, which in turn leads to the recruitment of the protein tyrosine phosphatase 1/PTPN6, leading to the negative regulation of BCR signaling. If this negative signaling from is of sufficient strength, apoptosis of the B-cell can be induced. This is B-cell receptor CD22 from Homo sapiens (Human).